The following is a 378-amino-acid chain: Ferredoxin--NADP reductase, root isozyme, chloroplastic (378 aa).

Positions 1–17 (MATAVASQVAVSAPAGS) are enriched in low complexity. The segment at 1 to 27 (MATAVASQVAVSAPAGSDRGLRSSGIQ) is disordered. Residues 1-62 (MATAVASQVA…PRHANKVLCM (62 aa)) constitute a chloroplast transit peptide. The region spanning 93 to 221 (KEPYTATIVS…TGPSGKIMLL (129 aa)) is the FAD-binding FR-type domain. Residues 153–156 (RLYS), 174–176 (CVR), Tyr180, 195–197 (VCS), and Thr237 contribute to the FAD site. NADP(+) contacts are provided by Ser156 and Arg176. Residues Thr237, 269–270 (VA), 299–300 (SR), Lys309, 337–338 (GL), and Glu376 each bind NADP(+).

This sequence belongs to the ferredoxin--NADP reductase type 1 family. FAD is required as a cofactor.

It localises to the plastid. The protein localises to the chloroplast. The catalysed reaction is 2 reduced [2Fe-2S]-[ferredoxin] + NADP(+) + H(+) = 2 oxidized [2Fe-2S]-[ferredoxin] + NADPH. Its pathway is energy metabolism; photosynthesis. May play a key role in regulating the relative amounts of cyclic and non-cyclic electron flow to meet the demands of the plant for ATP and reducing power. Is involved in nitrate assimilation. This chain is Ferredoxin--NADP reductase, root isozyme, chloroplastic, found in Oryza sativa subsp. japonica (Rice).